The sequence spans 291 residues: ATP synthase gamma chain (291 aa).

The protein belongs to the ATPase gamma chain family. As to quaternary structure, F-type ATPases have 2 components, CF(1) - the catalytic core - and CF(0) - the membrane proton channel. CF(1) has five subunits: alpha(3), beta(3), gamma(1), delta(1), epsilon(1). CF(0) has three main subunits: a, b and c.

It localises to the cell membrane. Functionally, produces ATP from ADP in the presence of a proton gradient across the membrane. The gamma chain is believed to be important in regulating ATPase activity and the flow of protons through the CF(0) complex. The protein is ATP synthase gamma chain of Streptococcus pyogenes serotype M1.